The chain runs to 382 residues: D-galactonate dehydratase (382 aa).

D183 provides a ligand contact to Mg(2+). H185 serves as the catalytic Proton donor. Mg(2+) is bound by residues E209 and E235. Residue H285 is the Proton acceptor of the active site.

The protein belongs to the mandelate racemase/muconate lactonizing enzyme family. GalD subfamily. Mg(2+) is required as a cofactor.

It catalyses the reaction D-galactonate = 2-dehydro-3-deoxy-D-galactonate + H2O. Its pathway is carbohydrate acid metabolism; D-galactonate degradation; D-glyceraldehyde 3-phosphate and pyruvate from D-galactonate: step 1/3. Catalyzes the dehydration of D-galactonate to 2-keto-3-deoxy-D-galactonate. This is D-galactonate dehydratase from Ralstonia nicotianae (strain ATCC BAA-1114 / GMI1000) (Ralstonia solanacearum).